We begin with the raw amino-acid sequence, 863 residues long: Potassium/sodium hyperpolarization-activated cyclic nucleotide-gated channel 2 (863 aa).

Over residues 1 to 10 the composition is skewed to gly residues; it reads MDARGGGGRP. The tract at residues 1–131 is disordered; the sequence is MDARGGGGRP…AGPAGEPRGS (131 aa). The Cytoplasmic segment spans residues 1–188; sequence MDARGGGGRP…PYSDFRFYWD (188 aa). The segment covering 17–47 has biased composition (pro residues); sequence TPAPGPPPPPPPPAPPQPQPPPAPPPNPTTP. Residues 106–128 are compositionally biased toward low complexity; it reads GAASGPSAAEEAGSEEAGPAGEP. 2 positions are modified to phosphoserine: Ser119 and Ser134. An involved in subunit assembly region spans residues 131 to 182; the sequence is SQASFLQRQFGALLQPGVNKFSLRMFGSQKAVEREQERVKSAGAWIIHPYSD. A helical membrane pass occupies residues 189–209; sequence FTMLLFMVGNLIIIPVGITFF. The Extracellular portion of the chain corresponds to 210-213; sequence KDET. The helical transmembrane segment at 214 to 234 threads the bilayer; the sequence is TAPWIVFNVVSDTFFLMDLVL. Residues 235-261 are Cytoplasmic-facing; that stretch reads NFRTGIVIEDNTEIILDPEKIKKKYLR. A helical transmembrane segment spans residues 262–282; it reads TWFVVDFVSSIPVDYIFLIVE. Topologically, residues 283–290 are extracellular; that stretch reads KGIDSEVY. The helical; Voltage-sensor transmembrane segment at 291–311 threads the bilayer; that stretch reads KTARALRIVRFTKILSLLRLL. At 312-342 the chain is on the cytoplasmic side; sequence RLSRLIRYIHQWEEIFHMTYDLASAVMRICN. A helical transmembrane segment spans residues 343–363; sequence LISMMLLLCHWDGCLQFLVPM. The Extracellular portion of the chain corresponds to 364–386; the sequence is LQDFPSDCWVSINNMVNHSWSEL. Asn380 is a glycosylation site (N-linked (GlcNAc...) asparagine). An intramembrane region (pore-forming) is located at residues 387–408; sequence YSFALFKAMSHMLCIGYGRQAP. Topologically, residues 409 to 413 are extracellular; sequence ESMTD. Residues 414 to 434 traverse the membrane as a helical segment; the sequence is IWLTMLSMIVGATCYAMFIGH. Residues 435–863 lie on the Cytoplasmic side of the membrane; it reads ATALIQSLDS…SARSRLSSNL (429 aa). 3',5'-cyclic AMP contacts are provided by Gly581, Glu582, Cys584, Arg591, Thr592, and Arg632. Ser641 carries the post-translational modification Phosphoserine; by PKG/PRKG2. Ser726 carries the post-translational modification Phosphoserine. At Arg728 the chain carries Omega-N-methylarginine. The segment at 730–863 is disordered; it reads VRRAPPGPLP…SARSRLSSNL (134 aa). A compositionally biased stretch (pro residues) spans 734 to 755; sequence PPGPLPPAASPGPPAASPPAAP. 3 positions are modified to phosphoserine: Ser743, Ser750, and Ser757. Low complexity-rich tracts occupy residues 756 to 765, 778 to 800, and 808 to 834; these read SSPRAPRTSP, PALP…PSLP, and PAAS…AAPS. A phosphoserine mark is found at Ser840, Ser842, and Ser847.

Belongs to the potassium channel HCN family. As to quaternary structure, homotetramer. The channel is composed of a homo- or heterotetrameric complex of pore-forming subunits. Heterotetramer with HCN1. Forms an obligate 4:4 complex with accessory subunit PEX5L; regulates HCN2 cell-surface expression and cyclic nucleotide dependence. Interacts with KCNE2. Post-translationally, S-palmitoylated. N-glycosylated; required for cell surface trafficking of HCN2. In terms of processing, phosphorylation at Ser-641 by PRKG2 shifts the voltage-dependence to more negative voltages, hence counteracting the stimulatory effect of cGMP on gating. As to expression, highly expressed in brain. Detected at low levels in heart, in ventricle, atrium and in sinoatrial node (SAN).

The protein localises to the cell membrane. It carries out the reaction Na(+)(in) = Na(+)(out). The enzyme catalyses K(+)(in) = K(+)(out). The catalysed reaction is NH4(+)(in) = NH4(+)(out). Activated by cAMP, and at 10-100 times higher concentrations, also by cGMP. cAMP binding causes a conformation change that leads to the assembly of an active tetramer and channel opening. In the absence of cAMP, the C-terminal region is thought to exert a tonic inhibition on the pore when HCN2 is in a non-tetrameric form. Channel activity is modulated by intracellular chloride ions and pH; acidic pH shifts the activation to more negative voltages. Phosphatidylinositol-4,5- bisphosphate (PIP(2)) acts as a ligand that allosterically opens HCN2 by shifting voltage-dependent channel activation toward depolarized potentials. Inhibited by extracellular cesium ions. Its function is as follows. Hyperpolarization-activated ion channel exhibiting weak selectivity for potassium over sodium ions. Contributes to the native pacemaker currents in heart (If) and in neurons (Ih). Can also transport ammonium in the distal nephron. Involved in the initiation of neuropathic pain in sensory neurons. The polypeptide is Potassium/sodium hyperpolarization-activated cyclic nucleotide-gated channel 2 (Mus musculus (Mouse)).